Here is a 342-residue protein sequence, read N- to C-terminus: 4-hydroxy-2-oxovalerate aldolase (342 aa).

In terms of domain architecture, Pyruvate carboxyltransferase spans 8 to 260; the sequence is ITVHDMTLRD…ATGVDLFKMQ (253 aa). 16-17 contributes to the substrate binding site; it reads RD. Residue aspartate 17 participates in Mn(2+) binding. The active-site Proton acceptor is the histidine 20. Substrate contacts are provided by serine 170 and histidine 199. Residues histidine 199 and histidine 201 each coordinate Mn(2+). Position 290 (tyrosine 290) interacts with substrate.

The protein belongs to the 4-hydroxy-2-oxovalerate aldolase family.

It catalyses the reaction (S)-4-hydroxy-2-oxopentanoate = acetaldehyde + pyruvate. The sequence is that of 4-hydroxy-2-oxovalerate aldolase from Albidiferax ferrireducens (strain ATCC BAA-621 / DSM 15236 / T118) (Rhodoferax ferrireducens).